We begin with the raw amino-acid sequence, 78 residues long: Magnetosome protein MamL (78 aa).

An N-terminal signal peptide occupies residues 1-22; sequence MVRVIGSLVFGGLILLLASSNA. The Lumenal portion of the chain corresponds to 23–38; the sequence is HMVETRFGPLIMLAPH. A helical transmembrane segment spans residues 39–59; that stretch reads FVVLGITFFLGFAIGIVLVFA. The Cytoplasmic segment spans residues 60-78; the sequence is NVMKRRKHKLPGKNIVIKR.

Belongs to the magnetosome MamL family.

It localises to the magnetosome membrane. Its function is as follows. Involved in magnetite crystal maturation, but not in magnetosome vesicle tubulation or formation. One of 7 genes (mamLQBIEMO) able to induce magnetosome membrane biogenesis; coexpression of mamLQRBIEMO in a deletion of the 17 gene mamAB operon restores magnetosome vesicle formation but not magnetite biosynthesis. The polypeptide is Magnetosome protein MamL (Magnetospirillum gryphiswaldense (strain DSM 6361 / JCM 21280 / NBRC 15271 / MSR-1)).